Reading from the N-terminus, the 285-residue chain is 4-hydroxybenzoate octaprenyltransferase (285 aa).

A run of 9 helical transmembrane segments spans residues 19–39 (IGSL…ADGL), 42–62 (WHVL…GCVI), 82–102 (LPSG…LVVC), 104–124 (FLLV…GIVL), 136–156 (YLPQ…AYAA), 166–186 (WLLF…YAMV), 210–230 (IIGL…SQLA), 233–253 (GIYY…QWLI), and 265–285 (FLNN…SVLI).

Belongs to the UbiA prenyltransferase family. It depends on Mg(2+) as a cofactor.

Its subcellular location is the cell inner membrane. It catalyses the reaction all-trans-octaprenyl diphosphate + 4-hydroxybenzoate = 4-hydroxy-3-(all-trans-octaprenyl)benzoate + diphosphate. Its pathway is cofactor biosynthesis; ubiquinone biosynthesis. Its function is as follows. Catalyzes the prenylation of para-hydroxybenzoate (PHB) with an all-trans polyprenyl group. Mediates the second step in the final reaction sequence of ubiquinone-8 (UQ-8) biosynthesis, which is the condensation of the polyisoprenoid side chain with PHB, generating the first membrane-bound Q intermediate 3-octaprenyl-4-hydroxybenzoate. The chain is 4-hydroxybenzoate octaprenyltransferase from Aliivibrio fischeri (strain ATCC 700601 / ES114) (Vibrio fischeri).